Reading from the N-terminus, the 408-residue chain is Peptidase T (408 aa).

His78 provides a ligand contact to Zn(2+). Asp80 is a catalytic residue. Asp141 provides a ligand contact to Zn(2+). Residue Glu175 is the Proton acceptor of the active site. 3 residues coordinate Zn(2+): Glu176, Asp198, and His380.

Belongs to the peptidase M20B family. Zn(2+) is required as a cofactor.

The protein localises to the cytoplasm. It carries out the reaction Release of the N-terminal residue from a tripeptide.. In terms of biological role, cleaves the N-terminal amino acid of tripeptides. This is Peptidase T from Clostridium acetobutylicum (strain ATCC 824 / DSM 792 / JCM 1419 / IAM 19013 / LMG 5710 / NBRC 13948 / NRRL B-527 / VKM B-1787 / 2291 / W).